The sequence spans 99 residues: Malonate decarboxylase acyl carrier protein (99 aa).

Ser25 carries the post-translational modification O-(phosphoribosyl dephospho-coenzyme A)serine.

Post-translationally, covalently binds the prosthetic group of malonate decarboxylase.

It localises to the cytoplasm. Functionally, subunit of malonate decarboxylase, it is an acyl carrier protein to which acetyl and malonyl thioester residues are bound via a 2'-(5''-phosphoribosyl)-3'-dephospho-CoA prosthetic group and turn over during the catalytic mechanism. This chain is Malonate decarboxylase acyl carrier protein (mdcC), found in Klebsiella pneumoniae.